The primary structure comprises 138 residues: Small ribosomal subunit protein uS11 (138 aa).

The span at 1–12 (MPPKKAAASSAK) shows a compositional bias: low complexity. Residues 1-28 (MPPKKAAASSAKKGQKTRRREKKNVPHG) are disordered. Positions 13-22 (KGQKTRRREK) are enriched in basic residues.

Belongs to the universal ribosomal protein uS11 family. As to quaternary structure, part of the 30S ribosomal subunit. Interacts with proteins S7 and S18. Binds to IF-3.

In terms of biological role, located on the platform of the 30S subunit, it bridges several disparate RNA helices of the 16S rRNA. Forms part of the Shine-Dalgarno cleft in the 70S ribosome. The polypeptide is Small ribosomal subunit protein uS11 (Mycobacterium sp. (strain JLS)).